The primary structure comprises 515 residues: ATP synthase subunit alpha (515 aa).

An ATP-binding site is contributed by 171–178 (GDRQTGKT).

It belongs to the ATPase alpha/beta chains family. In terms of assembly, F-type ATPases have 2 components, CF(1) - the catalytic core - and CF(0) - the membrane proton channel. CF(1) has five subunits: alpha(3), beta(3), gamma(1), delta(1), epsilon(1). CF(0) has three main subunits: a(1), b(2) and c(9-12). The alpha and beta chains form an alternating ring which encloses part of the gamma chain. CF(1) is attached to CF(0) by a central stalk formed by the gamma and epsilon chains, while a peripheral stalk is formed by the delta and b chains.

It localises to the cell inner membrane. It carries out the reaction ATP + H2O + 4 H(+)(in) = ADP + phosphate + 5 H(+)(out). Functionally, produces ATP from ADP in the presence of a proton gradient across the membrane. The alpha chain is a regulatory subunit. This chain is ATP synthase subunit alpha, found in Xylella fastidiosa (strain 9a5c).